The following is a 1182-amino-acid chain: Phosphatidylinositol 3-kinase age-1 (1182 aa).

Residues 1–16 (MSMGRSPSTTFRSRTG) are compositionally biased toward polar residues. A disordered region spans residues 1 to 24 (MSMGRSPSTTFRSRTGSHGARDLI). The region spanning 74–174 (NEGVADIITM…FPMLFLYQPD (101 aa)) is the PI3K-ABD domain. The PI3K-RBD domain occupies 266 to 358 (KRKAEINGVC…YRCPGFVVRR (93 aa)). One can recognise a C2 PI3K-type domain in the interval 425–577 (LDANLMIRPV…SSYGGRVRMP (153 aa)). The region spanning 601–788 (DDYESCIRDP…SLLMEAYLRG (188 aa)) is the PIK helical domain. The PI3K/PI4K catalytic domain occupies 853-1168 (IIDKAIVLGS…IYEEAFNGSW (316 aa)). The G-loop stretch occupies residues 859–865 (VLGSAKR). A catalytic loop region spans residues 1028 to 1036 (GIKDRHSDN). Residues 1047–1073 (HIDFGHILGHGKTKLGIQRDRQPFILT) are activation loop.

The protein belongs to the PI3/PI4-kinase family.

The enzyme catalyses a 1,2-diacyl-sn-glycero-3-phospho-(1D-myo-inositol) + ATP = a 1,2-diacyl-sn-glycero-3-phospho-(1D-myo-inositol-3-phosphate) + ADP + H(+). Its function is as follows. Phosphatidylinositol 3-kinase homolog that regulates longevity and diapause. Promotes cell survival during embryonic development by recruiting akt-1/2 to the plasma membrane through the production of PtdIns(3,4,5)P3. Could function in the development or neuroendocrine signaling of the dauer pathway. Mediates susceptibility to enteropathogenic E.coli infection. May negatively regulate AYI interneuron neurite outgrowth. Plays a role in aversive olfactory learning when an odor is associated with food deprivation. Regulates this process by promoting the nuclear relocalization of egl-4 in AWC olfactory neurons after odor conditioning. This is Phosphatidylinositol 3-kinase age-1 from Caenorhabditis elegans.